Reading from the N-terminus, the 288-residue chain is Aminoglycoside 6-adenylyltransferase (288 aa).

It carries out the reaction streptomycin + ATP = 6-O-adenylylstreptomycin + diphosphate. Functionally, mediates bacterial resistance to streptomycin, is probably a streptomycin 6-adenylyltransferase. This chain is Aminoglycoside 6-adenylyltransferase, found in Campylobacter jejuni.